Consider the following 331-residue polypeptide: Putative serine/threonine-protein kinase ZK507.1 (331 aa).

The Protein kinase domain occupies 1–270 (MKVNEEGFAI…CKLTLKEPLV (270 aa)). D116 serves as the catalytic Proton acceptor. Over residues 302–314 (SDRNEENSLDRSK) the composition is skewed to basic and acidic residues. Residues 302–331 (SDRNEENSLDRSKTGTLSFNNSKNKKPSRY) are disordered.

This sequence belongs to the protein kinase superfamily. Ser/Thr protein kinase family.

The catalysed reaction is L-seryl-[protein] + ATP = O-phospho-L-seryl-[protein] + ADP + H(+). It carries out the reaction L-threonyl-[protein] + ATP = O-phospho-L-threonyl-[protein] + ADP + H(+). The protein is Putative serine/threonine-protein kinase ZK507.1 of Caenorhabditis elegans.